Here is a 646-residue protein sequence, read N- to C-terminus: Cartilage acidic protein 1 (646 aa).

The N-terminal stretch at 1 to 28 (MAPSADPGMVRMALLLLPPLWLLPLTGG) is a signal peptide. The stretch at 47–89 (DYDSNPTQLNYGVAVTDVDHDGDFEIVVAGYTGPNLVLKYNRA) is one FG-GAP 1; atypical repeat. The FG-GAP 2; atypical repeat unit spans residues 106–148 (YALRDRQGNAIGVTACDIDGDGREEIYFLNTNNAFSGVATYTD). The FG-GAP 3; atypical repeat unit spans residues 284–334 (AGVDDPHQHGRGVALADFNRDGKVDIVYGNWNGPHRLYLQMSAHGKVRFRD). The FG-GAP 4; atypical repeat unit spans residues 396–438 (GDALEPEGRGTGGVVTDFDGDGMLDLILSHGESMAQPLSVFRG). Positions 560-606 (DTNECIQFPFVCPRDKPVCVNTYGSYRCRTNKRCNRGYEPNEDGTAC) constitute an EGF-like domain. Intrachain disulfides connect Cys-564-Cys-578, Cys-571-Cys-587, and Cys-593-Cys-606.

The protein resides in the secreted. It localises to the extracellular space. The protein localises to the extracellular matrix. In Mus musculus (Mouse), this protein is Cartilage acidic protein 1 (Crtac1).